The sequence spans 339 residues: Deubiquitinase and deneddylase Dub2 (339 aa).

Residues 36–56 (IIIALFLIVISCGLILCAYTF) form a helical membrane-spanning segment. Residues H203, D220, and C282 contribute to the active site.

Belongs to the peptidase C48 family.

It is found in the secreted. Its subcellular location is the host cell. The protein localises to the membrane. In terms of biological role, effector proteins function to alter host cell physiology and promote bacterial survival in host tissues. This protease possesses deubiquitinating and deneddylating activities. The polypeptide is Deubiquitinase and deneddylase Dub2 (cdu2) (Chlamydia trachomatis serovar L2 (strain ATCC VR-902B / DSM 19102 / 434/Bu)).